Here is a 602-residue protein sequence, read N- to C-terminus: Cholinesterase (602 aa).

Residues 1–28 (MQSRSTVIYIRFVLWFLLLWVLFEKSHT) form the signal peptide. Residues Asn85 and Asn134 are each glycosylated (N-linked (GlcNAc...) asparagine). Residue 144–145 (GS) coordinates substrate. Ser226 functions as the Acyl-ester intermediate in the catalytic mechanism. A Phosphoserine modification is found at Ser226. Residues Asn269 and Asn284 are each glycosylated (N-linked (GlcNAc...) asparagine). Glu353 (charge relay system) is an active-site residue. N-linked (GlcNAc...) asparagine glycosylation occurs at Asn369. The active-site Charge relay system is the His466. N-linked (GlcNAc...) asparagine glycosylation is found at Asn483, Asn509, Asn513, and Asn514.

It belongs to the type-B carboxylesterase/lipase family. Homotetramer; disulfide-linked. Dimer of dimers. As to expression, present in most cells except erythrocytes.

It is found in the secreted. The enzyme catalyses an acylcholine + H2O = a carboxylate + choline + H(+). Functionally, esterase with broad substrate specificity. Contributes to the inactivation of the neurotransmitter acetylcholine. Can degrade neurotoxic organophosphate esters. This chain is Cholinesterase (BCHE), found in Bos taurus (Bovine).